Here is a 417-residue protein sequence, read N- to C-terminus: 1-deoxy-D-xylulose 5-phosphate reductoisomerase (417 aa).

Residues Thr10, Gly11, Ser12, Ile13, Gly36, Arg37, Asn38, and Asn130 each contribute to the NADPH site. Lys131 is a binding site for 1-deoxy-D-xylulose 5-phosphate. Glu132 lines the NADPH pocket. Asp156 is a binding site for Mn(2+). Residues Ser157, Glu158, Ser194, and His217 each coordinate 1-deoxy-D-xylulose 5-phosphate. Residue Glu158 coordinates Mn(2+). Position 223 (Gly223) interacts with NADPH. Positions 230, 235, 236, and 239 each coordinate 1-deoxy-D-xylulose 5-phosphate. Glu239 lines the Mn(2+) pocket.

It belongs to the DXR family. It depends on Mg(2+) as a cofactor. The cofactor is Mn(2+).

It carries out the reaction 2-C-methyl-D-erythritol 4-phosphate + NADP(+) = 1-deoxy-D-xylulose 5-phosphate + NADPH + H(+). Its pathway is isoprenoid biosynthesis; isopentenyl diphosphate biosynthesis via DXP pathway; isopentenyl diphosphate from 1-deoxy-D-xylulose 5-phosphate: step 1/6. Its function is as follows. Catalyzes the NADPH-dependent rearrangement and reduction of 1-deoxy-D-xylulose-5-phosphate (DXP) to 2-C-methyl-D-erythritol 4-phosphate (MEP). This chain is 1-deoxy-D-xylulose 5-phosphate reductoisomerase, found in Synechococcus sp. (strain CC9902).